The sequence spans 600 residues: Proline--tRNA ligase (600 aa).

This sequence belongs to the class-II aminoacyl-tRNA synthetase family. ProS type 1 subfamily. As to quaternary structure, homodimer.

It localises to the cytoplasm. It catalyses the reaction tRNA(Pro) + L-proline + ATP = L-prolyl-tRNA(Pro) + AMP + diphosphate. Its function is as follows. Catalyzes the attachment of proline to tRNA(Pro) in a two-step reaction: proline is first activated by ATP to form Pro-AMP and then transferred to the acceptor end of tRNA(Pro). As ProRS can inadvertently accommodate and process non-cognate amino acids such as alanine and cysteine, to avoid such errors it has two additional distinct editing activities against alanine. One activity is designated as 'pretransfer' editing and involves the tRNA(Pro)-independent hydrolysis of activated Ala-AMP. The other activity is designated 'posttransfer' editing and involves deacylation of mischarged Ala-tRNA(Pro). The misacylated Cys-tRNA(Pro) is not edited by ProRS. The chain is Proline--tRNA ligase from Prochlorococcus marinus (strain MIT 9211).